Reading from the N-terminus, the 1383-residue chain is DNA-directed RNA polymerase subunit beta (1383 aa).

Belongs to the RNA polymerase beta chain family. In terms of assembly, the RNAP catalytic core consists of 2 alpha, 1 beta, 1 beta' and 1 omega subunit. When a sigma factor is associated with the core the holoenzyme is formed, which can initiate transcription.

It catalyses the reaction RNA(n) + a ribonucleoside 5'-triphosphate = RNA(n+1) + diphosphate. Functionally, DNA-dependent RNA polymerase catalyzes the transcription of DNA into RNA using the four ribonucleoside triphosphates as substrates. This chain is DNA-directed RNA polymerase subunit beta, found in Bartonella tribocorum (strain CIP 105476 / IBS 506).